Consider the following 343-residue polypeptide: MNALHQKCAVCGRFTTEFNYSVLSCNSCKIFFRRLIVRTVPIKKCFRGERCFEKTPYIFKCTSCRFQKCLYVGMTLPSYLLVLEQNKEQRLAITIDCVRNTHNKRMDSLFNFFVTEMNPNVDDIVELNKITYTKRDEHIRMDFQTWAFHSCVTTIDFMKQFPFVNLLRSTDQMILLKESYVKLGALISATRAYSSKKQCISFPDGTDCLPKTQWTVPKISPNLENRIRCRVIDKLRELNIQNDEFYLLSVLLFCNPAITNLSENGQLLLTSYQKMYSSALLYYCLLTYQKSGPSRFSELLGLFTLLGQHYDDIIHYYVLMQLNQSEVELKKLVKDGIEAAYKS.

The nuclear receptor DNA-binding region spans 5–81 (HQKCAVCGRF…VGMTLPSYLL (77 aa)). 2 consecutive NR C4-type zinc fingers follow at residues 8 to 28 (CAVC…CNSC) and 45 to 64 (CFRG…CTSC). Positions 101 to 339 (THNKRMDSLF…KKLVKDGIEA (239 aa)) constitute an NR LBD domain.

It belongs to the nuclear hormone receptor family.

The protein resides in the nucleus. Orphan nuclear receptor. The protein is Nuclear hormone receptor family member nhr-167 (nhr-167) of Caenorhabditis elegans.